Here is a 236-residue protein sequence, read N- to C-terminus: B-cell antigen receptor complex-associated protein alpha chain (236 aa).

The N-terminal stretch at 1 to 32 (MPGGPGLLQALCATTFLLFLISAGGLGPGSQA) is a signal peptide. An Ig-like C2-type domain is found at 33-122 (LWVDGGPPSM…EKDLNQKILS (90 aa)). Over 33–151 (LWVDGGPPSM…LDMGEGTKNN (119 aa)) the chain is Extracellular. A disulfide bond links Cys-54 and Cys-109. N-linked (GlcNAc...) asparagine glycans are attached at residues Asn-66 and Asn-76. The helical transmembrane segment at 152 to 172 (IITAEGIILLFCAVVPGTLLL) threads the bilayer. At 173–236 (FRKRWQNMKF…GDGDVQLEKP (64 aa)) the chain is on the cytoplasmic side. In terms of domain architecture, ITAM spans 185-213 (DAQDDYEDENLYEGLNLDDCSMYEDISRG). At Tyr-196 the chain carries Phosphotyrosine; by SRC-type Tyr-kinases. At Tyr-207 the chain carries Phosphotyrosine. Residue Arg-212 is modified to Asymmetric dimethylarginine; by PRMT1. Tyr-218 bears the Phosphotyrosine; by Tyr-kinases mark.

Heterodimer of alpha and beta chains; disulfide-linked. Part of the B-cell antigen receptor complex where the alpha/beta chain heterodimer is non-covalently associated with an antigen-specific membrane-bound surface immunoglobulin of two heavy chains and two light chains. Interacts through its phosphorylated ITAM domain with the SH2 domains of SYK which stimulates SYK autophosphorylation and activation. Also interacts, when phosphorylated on Tyr-207, with the SH2 domain of BLNK/SLP65, bringing BLNK into proximity with SYK and allowing SYK to phosphorylate BLNK which is necessary for trafficking of the BCR to late endosomes. Interacts with Src-family tyrosine kinases including FYN and LYN, increasing their activity. Phosphorylated on tyrosine, serine and threonine residues upon B-cell activation. Phosphorylation of tyrosine residues by Src-family kinases, including LYN, is an early and essential feature of the BCR signaling cascade. The phosphorylated tyrosines serve as docking sites for SH2-domain containing kinases, leading to their activation which in turn leads to phosphorylation of downstream targets. Phosphorylation of serine and threonine residues may prevent subsequent tyrosine phosphorylation. Post-translationally, arginine methylation in the ITAM domain may interfere with the binding of SYK. It promotes signals leading to B-cell differentiation.

The protein localises to the cell membrane. Functionally, required in cooperation with CD79B for initiation of the signal transduction cascade activated by binding of antigen to the B-cell antigen receptor complex (BCR) which leads to internalization of the complex, trafficking to late endosomes and antigen presentation. Also required for BCR surface expression and for efficient differentiation of pro- and pre-B-cells. Stimulates SYK autophosphorylation and activation. Binds to BLNK, bringing BLNK into proximity with SYK and allowing SYK to phosphorylate BLNK. Also interacts with and increases activity of some Src-family tyrosine kinases. Represses BCR signaling during development of immature B-cells. This chain is B-cell antigen receptor complex-associated protein alpha chain (CD79A), found in Canis lupus familiaris (Dog).